The primary structure comprises 1116 residues: Large proline-rich protein bag6-B (1116 aa).

Positions 7–82 constitute a Ubiquitin-like domain; the sequence is MDVTVKTLDS…HLVERAPPQT (76 aa). 7 disordered regions span residues 76–114, 170–221, 329–385, 473–502, 533–589, 640–678, and 1058–1080; these read ERAPPQTQTSTSGPSTSSSTSPSSSNAAPVPGAPERNGN, EGQP…PSEY, STTG…HPHP, PAAPSFNFQPGAAATTPPAPGGATTTAPGA, GGSS…GTDQ, VPVSTSPPQSASQAPPPPSSPAPPAHSAPPPAAAPESLP, and TGAKPESSTECVKRELDNSEAQG. A compositionally biased stretch (low complexity) spans 79–100; the sequence is PPQTQTSTSGPSTSSSTSPSSS. Polar residues predominate over residues 194–207; the sequence is RETLPQTTQNADGQ. A compositionally biased stretch (low complexity) spans 208-219; that stretch reads SNSTPTSHPSPS. Polar residues predominate over residues 344 to 353; sequence GNATPSTNTS. 3 stretches are compositionally biased toward low complexity: residues 482–502, 535–580, and 641–652; these read PGAAATTPPAPGGATTTAPGA, SSTS…SVPS, and PVSTSPPQSASQ. The span at 653–672 shows a compositional bias: pro residues; that stretch reads APPPPSSPAPPAHSAPPPAA. Over residues 1068 to 1080 the composition is skewed to basic and acidic residues; the sequence is CVKRELDNSEAQG.

In terms of assembly, component of the bag6/bat3 complex.

It is found in the cytoplasm. It localises to the cytosol. The protein localises to the nucleus. The protein resides in the secreted. Its subcellular location is the extracellular exosome. In terms of biological role, ATP-independent molecular chaperone preventing the aggregation of misfolded and hydrophobic patches-containing proteins. Functions as part of a cytosolic protein quality control complex, the bag6/bat3 complex, which maintains these client proteins in a soluble state and participates in their proper delivery to the endoplasmic reticulum or alternatively can promote their sorting to the proteasome where they undergo degradation. The bag6/bat3 complex is involved in the post-translational delivery of tail-anchored/type II transmembrane proteins to the endoplasmic reticulum membrane. Similarly, the bag6/bat3 complex also functions as a sorting platform for proteins of the secretory pathway that are mislocalized to the cytosol either delivering them to the proteasome for degradation or to the endoplasmic reticulum. The bag6/bat3 complex also plays a role in the endoplasmic reticulum-associated degradation (ERAD), a quality control mechanism that eliminates unwanted proteins of the endoplasmic reticulum through their retrotranslocation to the cytosol and their targeting to the proteasome. It maintains these retrotranslocated proteins in an unfolded yet soluble state condition in the cytosol to ensure their proper delivery to the proteasome. Also required for selective ubiquitin-mediated degradation of defective nascent chain polypeptides by the proteasome. Also involved in endoplasmic reticulum stress-induced pre-emptive quality control, a mechanism that selectively attenuates the translocation of newly synthesized proteins into the endoplasmic reticulum and reroutes them to the cytosol for proteasomal degradation. May ensure the proper degradation of these proteins and thereby protects the endoplasmic reticulum from protein overload upon stress. By stabilizing a large spectrum of proteins, may indirectly affect different biological processes including apoptosis. By controlling the steady-state expression of the IGF1R receptor, indirectly regulates the insulin-like growth factor receptor signaling pathway. Its function is as follows. When nuclear, may also act as a component of some chromatin regulator complex. This chain is Large proline-rich protein bag6-B, found in Xenopus laevis (African clawed frog).